A 434-amino-acid polypeptide reads, in one-letter code: Beta-enolase (434 aa).

S2 is modified (N-acetylserine). H158 and E167 together coordinate substrate. The active-site Proton donor is the E210. Positions 245, 293, and 318 each coordinate Mg(2+). Substrate is bound by residues E293 and D318. K343 functions as the Proton acceptor in the catalytic mechanism. Substrate contacts are provided by residues 370–373 and K394; that span reads SHRS.

This sequence belongs to the enolase family. Homodimer. Interacts with PNKD. Mg(2+) is required as a cofactor.

It is found in the cytoplasm. It carries out the reaction (2R)-2-phosphoglycerate = phosphoenolpyruvate + H2O. Its pathway is carbohydrate degradation; glycolysis; pyruvate from D-glyceraldehyde 3-phosphate: step 4/5. In terms of biological role, glycolytic enzyme that catalyzes the conversion of 2-phosphoglycerate to phosphoenolpyruvate. This chain is Beta-enolase (ENO3), found in Gallus gallus (Chicken).